The sequence spans 154 residues: Crossover junction endodeoxyribonuclease RuvC (154 aa).

Residues Asp-7, Glu-67, and Asp-139 contribute to the active site. Asp-7, Glu-67, and Asp-139 together coordinate Mg(2+).

Belongs to the RuvC family. Homodimer which binds Holliday junction (HJ) DNA. The HJ becomes 2-fold symmetrical on binding to RuvC with unstacked arms; it has a different conformation from HJ DNA in complex with RuvA. In the full resolvosome a probable DNA-RuvA(4)-RuvB(12)-RuvC(2) complex forms which resolves the HJ. It depends on Mg(2+) as a cofactor.

The protein resides in the cytoplasm. The catalysed reaction is Endonucleolytic cleavage at a junction such as a reciprocal single-stranded crossover between two homologous DNA duplexes (Holliday junction).. Its function is as follows. The RuvA-RuvB-RuvC complex processes Holliday junction (HJ) DNA during genetic recombination and DNA repair. Endonuclease that resolves HJ intermediates. Cleaves cruciform DNA by making single-stranded nicks across the HJ at symmetrical positions within the homologous arms, yielding a 5'-phosphate and a 3'-hydroxyl group; requires a central core of homology in the junction. The consensus cleavage sequence is 5'-(A/T)TT(C/G)-3'. Cleavage occurs on the 3'-side of the TT dinucleotide at the point of strand exchange. HJ branch migration catalyzed by RuvA-RuvB allows RuvC to scan DNA until it finds its consensus sequence, where it cleaves and resolves the cruciform DNA. This chain is Crossover junction endodeoxyribonuclease RuvC, found in Prochlorococcus marinus (strain NATL1A).